Here is a 257-residue protein sequence, read N- to C-terminus: THAP domain-containing protein 10 (257 aa).

The THAP-type zinc-finger motif lies at M1–H90. A compositionally biased stretch (polar residues) spans Q154–P168. Residues Q154–K178 form a disordered region.

The protein is THAP domain-containing protein 10 (THAP10) of Homo sapiens (Human).